A 140-amino-acid polypeptide reads, in one-letter code: Sex-regulated protein janus-B (140 aa).

Arg42 serves as a coordination point for substrate. His69 (proton acceptor) is an active-site residue. A substrate-binding site is contributed by 110 to 112 (SRT).

Belongs to the janus family.

In terms of biological role, janA and janB regulate somatic sex differentiation. The sequence is that of Sex-regulated protein janus-B (janB) from Drosophila simulans (Fruit fly).